The following is a 475-amino-acid chain: Ataxin-10 (475 aa).

An Omega-N-methylarginine modification is found at arginine 10. A phosphoserine mark is found at serine 12 and serine 77. The residue at position 82 (threonine 82) is a Phosphothreonine. A Phosphoserine modification is found at serine 430.

The protein belongs to the ataxin-10 family. As to quaternary structure, homooligomer. Interacts with GNB2. Interacts with IQCB1. Interacts with OGT. Post-translationally, polyubiquitinated. Phosphorylation at Ser-12 by AURKB promotes the association of ATXN10 with PLK1. Phosphorylation at Ser-77 and Thr-82 by PLK1 may play a role in the regulation of cytokinesis and may stimulate the proteasome-mediated degradation of ATXN10. Ubiquitous distribution. Markedly increased expression in testis, adrenals, and brain.

The protein resides in the cytoplasm. It localises to the perinuclear region. It is found in the midbody. Its subcellular location is the cytoskeleton. The protein localises to the cilium basal body. The protein resides in the microtubule organizing center. It localises to the centrosome. It is found in the centriole. May play a role in the regulation of cytokinesis. May play a role in signaling by stimulating protein glycosylation. Induces neuritogenesis by activating the Ras-MAP kinase pathway and is necessary for the survival of cerebellar neurons. Does not appear to play a major role in ciliogenesis. The sequence is that of Ataxin-10 (Atxn10) from Rattus norvegicus (Rat).